A 240-amino-acid chain; its full sequence is Methylthioribulose-1-phosphate dehydratase (240 aa).

A compositionally biased stretch (basic and acidic residues) spans 1 to 10; that stretch reads MAQEIEKTNN. The tract at residues 1–20 is disordered; it reads MAQEIEKTNNDHLVQSSDPE. Residue Cys100 coordinates substrate. His117 and His119 together coordinate Zn(2+). Glu146 (proton donor/acceptor) is an active-site residue. His202 is a Zn(2+) binding site.

Belongs to the aldolase class II family. MtnB subfamily. Zn(2+) is required as a cofactor.

Its subcellular location is the cytoplasm. The catalysed reaction is 5-(methylsulfanyl)-D-ribulose 1-phosphate = 5-methylsulfanyl-2,3-dioxopentyl phosphate + H2O. It functions in the pathway amino-acid biosynthesis; L-methionine biosynthesis via salvage pathway; L-methionine from S-methyl-5-thio-alpha-D-ribose 1-phosphate: step 2/6. Its function is as follows. Catalyzes the dehydration of methylthioribulose-1-phosphate (MTRu-1-P) into 2,3-diketo-5-methylthiopentyl-1-phosphate (DK-MTP-1-P). The protein is Methylthioribulose-1-phosphate dehydratase of Aspergillus fumigatus (strain CBS 144.89 / FGSC A1163 / CEA10) (Neosartorya fumigata).